The chain runs to 176 residues: Late lactation protein A (176 aa).

Positions 1 to 18 (MRVLFLTISLSLFSIIHA) are cleaved as a signal peptide. Residues cysteine 78 and cysteine 171 are joined by a disulfide bond.

Belongs to the calycin superfamily. Lipocalin family. As to expression, mammary gland specific. Secreted in milk.

The protein localises to the secreted. Probably serves a role in the transport of a small ligand released during the hydrolysis of milk fat. The polypeptide is Late lactation protein A (LLPA) (Notamacropus eugenii (Tammar wallaby)).